Consider the following 239-residue polypeptide: Ribonuclease HII (239 aa).

Residues 18-231 form the RNase H type-2 domain; the sequence is KIIVGLDEAG…SKNLLKEIEE (214 aa). A divalent metal cation-binding residues include D24, E25, and D125.

It belongs to the RNase HII family. Requires Mn(2+) as cofactor. The cofactor is Mg(2+).

It localises to the cytoplasm. The enzyme catalyses Endonucleolytic cleavage to 5'-phosphomonoester.. Its function is as follows. Endonuclease that specifically degrades the RNA of RNA-DNA hybrids. This Methanococcus maripaludis (strain C7 / ATCC BAA-1331) protein is Ribonuclease HII.